The sequence spans 122 residues: Large ribosomal subunit protein bL19 (122 aa).

It belongs to the bacterial ribosomal protein bL19 family.

Its function is as follows. This protein is located at the 30S-50S ribosomal subunit interface and may play a role in the structure and function of the aminoacyl-tRNA binding site. This is Large ribosomal subunit protein bL19 from Prosthecochloris aestuarii (strain DSM 271 / SK 413).